A 205-amino-acid chain; its full sequence is Adenylyl-sulfate kinase (205 aa).

Gly31 to Ser38 serves as a coordination point for ATP. The Phosphoserine intermediate role is filled by Ser105.

The protein belongs to the APS kinase family.

The catalysed reaction is adenosine 5'-phosphosulfate + ATP = 3'-phosphoadenylyl sulfate + ADP + H(+). It participates in sulfur metabolism; hydrogen sulfide biosynthesis; sulfite from sulfate: step 2/3. Functionally, catalyzes the synthesis of activated sulfate. In Shewanella pealeana (strain ATCC 700345 / ANG-SQ1), this protein is Adenylyl-sulfate kinase.